The primary structure comprises 345 residues: MPPPALVLLLGFLCHVAIAGRTCPKPDELPFSTVVPLKRTYEPGEQIVFSCQPGYVSRGGIRRFTCPLTGLWPINTLKCMPRVCPFAGILENGTVRYTTFEYPNTISFSCHTGFYLKGASSAKCTEEGKWSPDLPVCAPITCPPPPIPKFASLSVYKPLAGNNSFYGSKAVFKCLPHHAMFGNDTVTCTEHGNWTQLPECREVRCPFPSRPDNGFVNHPANPVLYYKDTATFGCHETYSLDGPEEVECSKFGNWSAQPSCKASCKLSIKRATVIYEGERVAIQNKFKNGMLHGQKVSFFCKHKEKKCSYTEDAQCIDGTIEIPKCFKEHSSLAFWKTDASDVKPC.

Positions 1 to 19 (MPPPALVLLLGFLCHVAIA) are cleaved as a signal peptide. Sushi domains are found at residues 21–81 (RTCP…KCMP), 82–139 (RVCP…VCAP), 140–202 (ITCP…ECRE), and 203–262 (VRCP…SCKA). Disulfide bonds link cysteine 23–cysteine 66, cysteine 51–cysteine 79, cysteine 84–cysteine 124, cysteine 110–cysteine 137, cysteine 142–cysteine 188, cysteine 174–cysteine 200, cysteine 205–cysteine 248, cysteine 234–cysteine 260, cysteine 264–cysteine 315, cysteine 300–cysteine 325, and cysteine 307–cysteine 345. An O-linked (GalNAc...) threonine glycan is attached at threonine 33. Asparagine 92 carries an N-linked (GlcNAc...) asparagine glycan. Asparagine 162, asparagine 183, and asparagine 193 each carry an N-linked (GlcNAc...) asparagine glycan. An N-linked (GlcNAc...) asparagine glycan is attached at asparagine 253. The tract at residues 263 to 345 (SCKLSIKRAT…KTDASDVKPC (83 aa)) is sushi-like.

In terms of tissue distribution, expressed by the liver and secreted in plasma.

It localises to the secreted. Its function is as follows. Binds to various kinds of negatively charged substances such as heparin, phospholipids, and dextran sulfate. May prevent activation of the intrinsic blood coagulation cascade by binding to phospholipids on the surface of damaged cells. The sequence is that of Beta-2-glycoprotein 1 (APOH) from Bos taurus (Bovine).